A 467-amino-acid polypeptide reads, in one-letter code: Dimethylamine methyltransferase MtbB1 (467 aa).

O356 is a non-standard amino acid (pyrrolysine).

Belongs to the dimethylamine methyltransferase family.

The enzyme catalyses Co(I)-[dimethylamine-specific corrinoid protein] + dimethylamine + H(+) = methyl-Co(III)-[dimethylamine-specific corrinoid protein] + methylamine. Its pathway is one-carbon metabolism; methanogenesis from dimethylamine. Its function is as follows. Catalyzes the transfer of a methyl group from dimethylamine to the corrinoid cofactor of MtbC. The polypeptide is Dimethylamine methyltransferase MtbB1 (mtbB1) (Methanosarcina barkeri (strain Fusaro / DSM 804)).